Here is a 371-residue protein sequence, read N- to C-terminus: Chorismate synthase (371 aa).

NADP(+) is bound by residues R48 and R54. FMN is bound by residues 131–133 (RSS), 245–246 (NA), G290, 305–309 (KPTSS), and R331.

The protein belongs to the chorismate synthase family. As to quaternary structure, homotetramer. The cofactor is FMNH2.

The catalysed reaction is 5-O-(1-carboxyvinyl)-3-phosphoshikimate = chorismate + phosphate. It participates in metabolic intermediate biosynthesis; chorismate biosynthesis; chorismate from D-erythrose 4-phosphate and phosphoenolpyruvate: step 7/7. Its function is as follows. Catalyzes the anti-1,4-elimination of the C-3 phosphate and the C-6 proR hydrogen from 5-enolpyruvylshikimate-3-phosphate (EPSP) to yield chorismate, which is the branch point compound that serves as the starting substrate for the three terminal pathways of aromatic amino acid biosynthesis. This reaction introduces a second double bond into the aromatic ring system. The polypeptide is Chorismate synthase (Mesorhizobium japonicum (strain LMG 29417 / CECT 9101 / MAFF 303099) (Mesorhizobium loti (strain MAFF 303099))).